We begin with the raw amino-acid sequence, 745 residues long: AMP deaminase 1 (745 aa).

T79 carries the post-translational modification Phosphothreonine. Phosphoserine is present on S83. A Phosphotyrosine modification is found at Y214. Residues H301 and H303 each contribute to the Zn(2+) site. Residues H303 and 372–377 (KFNDKY) contribute to the substrate site. S439 bears the Phosphoserine mark. H570 contacts Zn(2+). E573 provides a ligand contact to substrate. H592 (proton acceptor) is an active-site residue. Zn(2+) is bound at residue D647. Substrate is bound at residue 648–651 (DPMQ).

Belongs to the metallo-dependent hydrolases superfamily. Adenosine and AMP deaminases family. In terms of assembly, homotetramer. The cofactor is Zn(2+).

It carries out the reaction AMP + H2O + H(+) = IMP + NH4(+). It functions in the pathway purine metabolism; IMP biosynthesis via salvage pathway; IMP from AMP: step 1/1. Functionally, AMP deaminase plays a critical role in energy metabolism. The sequence is that of AMP deaminase 1 from Mus musculus (Mouse).